Reading from the N-terminus, the 442-residue chain is Prenyltransferase nscD (442 aa).

This sequence belongs to the tryptophan dimethylallyltransferase family.

It participates in secondary metabolite biosynthesis. Functionally, prenyltransferase; part of the gene cluster that mediates the biosynthesis of neosartoricin B, a prenylated anthracenone that probably exhibits T-cell antiproliferative activity, suggestive of a physiological role as an immunosuppressive agent. The non-reducing polyketide synthase nscA probably synthesizes and cyclizes the decaketide backbone. The hydrolase nscB then mediates the product release through hydrolysis followed by spontaneous decarboxylation. The prenyltransferase nscD catalyzes the addition of the dimethylallyl group to the aromatic C5. The FAD-dependent monooxygenase nscC is then responsible for the stereospecific hydroxylation at C2. Neosartoricin B can be converted into two additional compounds neosartoricins C and D. Neosartoricin C is a spirocyclic compound that is cyclized through the attack of C3 hydroxyl on C14, followed by dehydration. On the other hand, neosartoricin D is a further cyclized compound in which attack of C2 on C14 in neosartoricin C results in the formation of the acetal-containing dioxabicyclo-octanone ring. Both of these compounds are novel and possibly represent related metabolites of the gene cluster. This Trichophyton verrucosum (strain HKI 0517) protein is Prenyltransferase nscD.